We begin with the raw amino-acid sequence, 313 residues long: Ribosomal RNA small subunit methyltransferase H (313 aa).

Residues 35 to 37 (GGH), aspartate 55, phenylalanine 81, aspartate 103, and glutamine 110 contribute to the S-adenosyl-L-methionine site.

Belongs to the methyltransferase superfamily. RsmH family.

It is found in the cytoplasm. It catalyses the reaction cytidine(1402) in 16S rRNA + S-adenosyl-L-methionine = N(4)-methylcytidine(1402) in 16S rRNA + S-adenosyl-L-homocysteine + H(+). In terms of biological role, specifically methylates the N4 position of cytidine in position 1402 (C1402) of 16S rRNA. This chain is Ribosomal RNA small subunit methyltransferase H, found in Pseudomonas syringae pv. syringae (strain B728a).